A 188-amino-acid polypeptide reads, in one-letter code: NADH-quinone oxidoreductase subunit I (188 aa).

2 4Fe-4S ferredoxin-type domains span residues 44-74 (LNRY…VEGA) and 90-119 (QVYQ…MTNE). C54, C57, C60, C64, C99, C102, C105, and C109 together coordinate [4Fe-4S] cluster. Residues 167–188 (TGGAAAAAQDESEVDDTAGDRP) are disordered. Acidic residues predominate over residues 176–188 (DESEVDDTAGDRP).

The protein belongs to the complex I 23 kDa subunit family. In terms of assembly, NDH-1 is composed of 14 different subunits. Subunits NuoA, H, J, K, L, M, N constitute the membrane sector of the complex. Requires [4Fe-4S] cluster as cofactor.

It localises to the cell membrane. It catalyses the reaction a quinone + NADH + 5 H(+)(in) = a quinol + NAD(+) + 4 H(+)(out). Functionally, NDH-1 shuttles electrons from NADH, via FMN and iron-sulfur (Fe-S) centers, to quinones in the respiratory chain. The immediate electron acceptor for the enzyme in this species is believed to be ubiquinone. Couples the redox reaction to proton translocation (for every two electrons transferred, four hydrogen ions are translocated across the cytoplasmic membrane), and thus conserves the redox energy in a proton gradient. This chain is NADH-quinone oxidoreductase subunit I, found in Rhodococcus jostii (strain RHA1).